The following is a 248-amino-acid chain: DNA repair protein RecO (248 aa).

It belongs to the RecO family.

Its function is as follows. Involved in DNA repair and RecF pathway recombination. In Bacillus cereus (strain 03BB102), this protein is DNA repair protein RecO.